Reading from the N-terminus, the 1045-residue chain is Protein madd-4 (1045 aa).

The N-terminal stretch at 1 to 23 is a signal peptide; that stretch reads MKCSYTVVFLLFYLLIASFHVDA. 5 consecutive TSP type-1 domains span residues 24-71, 236-292, 294-510, 512-572, and 576-635; these read LSWA…KTCE, RCRW…NCVS, SCGR…HPCP, FWLT…NVVA, and TWVT…GSCS. Disulfide bonds link Cys-35–Cys-65, Cys-39–Cys-70, and Cys-50–Cys-55. N-linked (GlcNAc...) asparagine glycans are attached at residues Asn-268 and Asn-280. The 96-residue stretch at 637–732 folds into the Ig-like C2-type domain; it reads PELLSNRVFE…FTDRLQGNVT (96 aa). The cysteines at positions 674 and 722 are disulfide-linked. Asn-730 and Asn-781 each carry an N-linked (GlcNAc...) asparagine glycan. In terms of domain architecture, TSP type-1 6 spans 811–873; that stretch reads RWDIGHWSEC…TRPCHREDCP (63 aa). 2 N-linked (GlcNAc...) asparagine glycosylation sites follow: Asn-899 and Asn-906. The TSP type-1 7 domain maps to 932–990; the sequence is CKAEWRTSDWGSCSSECGTGGVQLRLLSCVWISSGRPAGRNCEQMRRPHSARACVADEP. Residues 1004–1041 form the PLAC domain; the sequence is RDASCQDQSRFCDIIKLFHSCDSLEVRQKCCSTCTFVE.

Interacts with eva-1 (via the SUEL-type lectin domain). Interacts with unc-5. Interacts with unc-40; the interaction is required for the localization of unc-40 to postsynaptic domains. Isoform a forms homodimers and heterodimers with isoform b. Isoform b forms homodimers and heterodimers with isoform a. Isoform b interacts with nlg-1 (via extracellular domain); the interaction is required for nlg-1 localization to postsynaptic domains. Isoform b interacts (via the Ig-like C2-type domain) with nrx-1 (via C-terminus). In terms of tissue distribution, isoform a: Expressed in the commissural GABAergic and cholinergic motor neurons in the first larval stage but only in the cholinergic motor neurons in later larval stages and in adult animals. At the L1 larval stage, mainly localized at the nerve ring and at the dorsal cord. Isoform b: Expressed in the commissural GABAergic and cholinergic motor neurons whose cell bodies reside in the ventral nerve cord and which extend axons into the ventral and dorsal nerve cord. Also expressed in the head neurons RIA, RIC, lateral IL1s, lateral IL2s, OLLs, RMEs and SABs, all of which extend axons into the nerve ring. Expressed in the embryogenic blast cells and the corresponding terminally differentiated ventral cord motor neurons and head neurons.

The protein resides in the cell projection. It localises to the axon. It is found in the secreted. Its subcellular location is the synapse. The protein localises to the extracellular space. The protein resides in the extracellular matrix. Component of an extracellular matrix cue that is involved in the guidance of dorsoventral midline migrations and in the specification of postsynaptic domains at neuromuscular junctions (NMJs). Acts as a ligand for the netrin receptor unc-40 and the neuroligin receptor nlg-1. Secreted by the dorsal and ventral nerve cords to attract sensory axons and muscle membrane extensions called muscle arms. In parallel with unc-6 and slt-1, involved in the netrin receptor unc-40 dependent guidance of the AVM and PVM mechanosensory axons along the dorsal-ventral axis. The unc-40 coreceptor eva-1 is enhancing the responsiveness of unc-40 to the madd-4 guidance cue to attract the muscle arm extensions and AVM mechanosensory axons towards the dorsoventral midline. Acts as a synaptic organizer and is required for the specification of inhibitory GABAergic and excitatory cholinergic identities of postsynaptic domains at neuromuscular junctions (NMJs). Required for the recruitment of unc-40 to both cholinergic and GABAergic NMJs. Promotes the clustering of ACh receptors and GABA(A) receptors at postsynaptic sites during synaptogenesis. The binding to the presynaptic adhesion protein nrx-1 and to the neuroligin nlg-1 at postsynaptic sites promotes clustering of GABAergic receptors at postsynaptic NMJs, thereby contributing to normal GABAergic synaptic transmission. Functionally, isoform a and isoform c: Promotes the clustering of acetylcholine receptors (AChR) at excitatory cholinergic synapses of NMJs via the netrin receptor unc-40. In terms of biological role, acts as a guidance cue in the attraction of muscle membrane extensions (muscle arms) to the dorsal cord and in cooperation with unc-6 to the ventral cord via the netrin receptor unc-40 and via the unc-40 coreceptor eva-1. Together with nrx-1, clusters netrin receptor unc-40 and neuroligin nlg-1 at postsynaptic sites of GABAergic NMJs, thereby promoting the recruitment of GABA(A) receptors at GABAergic synapses. Prevents the recruitment of GABAergic receptors to cholinergic synapses. The protein is Protein madd-4 of Caenorhabditis elegans.